The primary structure comprises 457 residues: Siroheme synthase (457 aa).

A precorrin-2 dehydrogenase /sirohydrochlorin ferrochelatase region spans residues 1-204 (MDHLPIFCQL…NDQKAITETT (204 aa)). NAD(+)-binding positions include 22-23 (DV) and 43-44 (LA). Residue Ser128 is modified to Phosphoserine. The interval 216–457 (GEVVLVGAGP…RDKLNWFSNH (242 aa)) is uroporphyrinogen-III C-methyltransferase. Pro225 contacts S-adenosyl-L-methionine. Catalysis depends on Asp248, which acts as the Proton acceptor. The active-site Proton donor is the Lys270. S-adenosyl-L-methionine contacts are provided by residues 301 to 303 (GGD), Ile306, 331 to 332 (TA), Met382, and Gly411.

In the N-terminal section; belongs to the precorrin-2 dehydrogenase / sirohydrochlorin ferrochelatase family. The protein in the C-terminal section; belongs to the precorrin methyltransferase family.

The catalysed reaction is uroporphyrinogen III + 2 S-adenosyl-L-methionine = precorrin-2 + 2 S-adenosyl-L-homocysteine + H(+). The enzyme catalyses precorrin-2 + NAD(+) = sirohydrochlorin + NADH + 2 H(+). It catalyses the reaction siroheme + 2 H(+) = sirohydrochlorin + Fe(2+). It participates in cofactor biosynthesis; adenosylcobalamin biosynthesis; precorrin-2 from uroporphyrinogen III: step 1/1. Its pathway is cofactor biosynthesis; adenosylcobalamin biosynthesis; sirohydrochlorin from precorrin-2: step 1/1. It functions in the pathway porphyrin-containing compound metabolism; siroheme biosynthesis; precorrin-2 from uroporphyrinogen III: step 1/1. The protein operates within porphyrin-containing compound metabolism; siroheme biosynthesis; siroheme from sirohydrochlorin: step 1/1. It participates in porphyrin-containing compound metabolism; siroheme biosynthesis; sirohydrochlorin from precorrin-2: step 1/1. Its function is as follows. Multifunctional enzyme that catalyzes the SAM-dependent methylations of uroporphyrinogen III at position C-2 and C-7 to form precorrin-2 via precorrin-1. Then it catalyzes the NAD-dependent ring dehydrogenation of precorrin-2 to yield sirohydrochlorin. Finally, it catalyzes the ferrochelation of sirohydrochlorin to yield siroheme. The polypeptide is Siroheme synthase (Escherichia coli O6:H1 (strain CFT073 / ATCC 700928 / UPEC)).